The chain runs to 147 residues: Hemoglobin subunit gamma (147 aa).

The Globin domain occupies 3–147 (HFTEEDKATI…VASALSSRYH (145 aa)). His-64 and His-93 together coordinate heme b.

Belongs to the globin family. Heterotetramer of two alpha chains and two gamma chains in fetal hemoglobin (Hb F). As to expression, red blood cells.

Functionally, gamma chains make up the fetal hemoglobin F, in combination with alpha chains. The protein is Hemoglobin subunit gamma (HBG) of Macaca fuscata fuscata (Japanese macaque).